The sequence spans 614 residues: GPI transamidase component GAA1 (614 aa).

Topologically, residues 1 to 19 (MALLEKLHRRIVDMGLVPR) are cytoplasmic. Residues 20-40 (IIALLPVISMLCALFGFISIA) form a helical membrane-spanning segment. Residues 41-356 (ILPMDGQYRR…APRQFVSISS (316 aa)) lie on the Lumenal side of the membrane. N87 is a glycosylation site (N-linked (GlcNAc...) asparagine). The chain crosses the membrane as a helical span at residues 357–377 (YLPSAVALSIAFAISSLNAFI). The Cytoplasmic portion of the chain corresponds to 378-394 (NNAYANISLFSEYNLVA). The chain crosses the membrane as a helical span at residues 395-415 (LLVWFVSLVISFVVSQAFLLI). The Lumenal portion of the chain corresponds to 416-464 (PSSGLLMTISMASCFLPLILSRKIHISEPLSYRLKNVAFLYFSLVSTSL). A helical membrane pass occupies residues 465 to 485 (LMINFAMALLIGTLAFPMTFV). Residues 486-535 (KTIVESSSEHEVTTQSSNPIKTEPKDEIELVENHMDTTPATPQQQKQKLK) lie on the Cytoplasmic side of the membrane. The helical transmembrane segment at 536–556 (NLVLLILTNPFISITLFGLFF) threads the bilayer. Topologically, residues 557 to 577 (DDEFHGFDIINKLVSAWLDLK) are lumenal. A helical membrane pass occupies residues 578 to 598 (CWSWFVLCIGWLPCWLLILAS). Topologically, residues 599–614 (SFESKSVVVRSKEKQS) are cytoplasmic. A Prevents secretion from ER motif is present at residues 610 to 614 (KEKQS).

Forms a complex with CDC91, GPI17, GPI16 and GPI8.

Its subcellular location is the endoplasmic reticulum membrane. It participates in glycolipid biosynthesis; glycosylphosphatidylinositol-anchor biosynthesis. In terms of biological role, component of the GPI transamidase complex. Required for a terminal step of GPI anchor attachment onto proteins. Affects endocytosis. This Saccharomyces cerevisiae (strain ATCC 204508 / S288c) (Baker's yeast) protein is GPI transamidase component GAA1 (GAA1).